The sequence spans 612 residues: FAD-linked oxidoreductase easE (612 aa).

An FAD-binding PCMH-type domain is found at 129 to 313; sequence HQGRIPLYSA…TRATMRVFPD (185 aa).

The protein belongs to the oxygen-dependent FAD-linked oxidoreductase family. The cofactor is FAD.

It participates in alkaloid biosynthesis; ergot alkaloid biosynthesis. FAD-linked oxidoreductase; part of the gene cluster that mediates the biosynthesis of fungal ergot alkaloid. DmaW catalyzes the first step of ergot alkaloid biosynthesis by condensing dimethylallyl diphosphate (DMAP) and tryptophan to form 4-dimethylallyl-L-tryptophan. The second step is catalyzed by the methyltransferase easF that methylates 4-dimethylallyl-L-tryptophan in the presence of S-adenosyl-L-methionine, resulting in the formation of 4-dimethylallyl-L-abrine. The catalase easC and the FAD-dependent oxidoreductase easE then transform 4-dimethylallyl-L-abrine to chanoclavine-I which is further oxidized by easD in the presence of NAD(+), resulting in the formation of chanoclavine-I aldehyde. Chanoclavine-I aldehyde is the precursor of ergoamides and ergopeptines in Clavicipitaceae, and clavine-type alcaloids such as fumiclavine in Trichocomaceae. However, the metabolites downstream of chanoclavine-I aldehyde in Arthrodermataceae have not been identified yet. The polypeptide is FAD-linked oxidoreductase easE (Arthroderma otae (strain ATCC MYA-4605 / CBS 113480) (Microsporum canis)).